Reading from the N-terminus, the 20-residue chain is D-alpha-glycerophosphatase (20 aa).

Monomer. It depends on Mg(2+) as a cofactor. Mn(2+) serves as cofactor.

The protein resides in the cytoplasm. Its pathway is polyol metabolism; glycerol biosynthesis. The sequence is that of D-alpha-glycerophosphatase from Bacillus licheniformis.